The primary structure comprises 239 residues: Pyridoxine 5'-phosphate synthase (239 aa).

Asn7 contacts 3-amino-2-oxopropyl phosphate. 9-10 is a 1-deoxy-D-xylulose 5-phosphate binding site; that stretch reads DH. Arg18 is a binding site for 3-amino-2-oxopropyl phosphate. The active-site Proton acceptor is the His43. Arg45 and His50 together coordinate 1-deoxy-D-xylulose 5-phosphate. The Proton acceptor role is filled by Glu70. Thr100 serves as a coordination point for 1-deoxy-D-xylulose 5-phosphate. His191 acts as the Proton donor in catalysis. Residues Gly192 and 213-214 contribute to the 3-amino-2-oxopropyl phosphate site; that span reads GH.

It belongs to the PNP synthase family. In terms of assembly, homooctamer; tetramer of dimers.

It is found in the cytoplasm. It carries out the reaction 3-amino-2-oxopropyl phosphate + 1-deoxy-D-xylulose 5-phosphate = pyridoxine 5'-phosphate + phosphate + 2 H2O + H(+). The protein operates within cofactor biosynthesis; pyridoxine 5'-phosphate biosynthesis; pyridoxine 5'-phosphate from D-erythrose 4-phosphate: step 5/5. Its function is as follows. Catalyzes the complicated ring closure reaction between the two acyclic compounds 1-deoxy-D-xylulose-5-phosphate (DXP) and 3-amino-2-oxopropyl phosphate (1-amino-acetone-3-phosphate or AAP) to form pyridoxine 5'-phosphate (PNP) and inorganic phosphate. The sequence is that of Pyridoxine 5'-phosphate synthase from Geobacter sp. (strain M21).